Consider the following 100-residue polypeptide: uncharacterized protein (100 aa).

The span at E68–P91 shows a compositional bias: basic and acidic residues. A disordered region spans residues E68 to K100.

It belongs to the chlamydial CPn_0121/CT_031/TC_0300 family.

This is an uncharacterized protein from Chlamydia muridarum (strain MoPn / Nigg).